The chain runs to 102 residues: uncharacterized protein (102 aa).

The helical transmembrane segment at 27 to 47 threads the bilayer; the sequence is TISLVSAGLLEEIFLLFGLTF.

It is found in the membrane. This is an uncharacterized protein from Saccharomyces cerevisiae (strain ATCC 204508 / S288c) (Baker's yeast).